A 604-amino-acid polypeptide reads, in one-letter code: Beta-(1--&gt;2)glucan export ATP-binding/permease protein NdvA (604 aa).

The 291-residue stretch at 21–311 folds into the ABC transmembrane type-1 domain; it reads GWILAFANLL…VVSFINSVFM (291 aa). The next 6 membrane-spanning stretches (helical) occupy residues 22 to 42, 68 to 88, 146 to 166, 168 to 188, 238 to 258, and 285 to 305; these read WILAFANLLLAGAQFAEPVLF, LLGAWVAFGLFTILCSAAVAL, EHFAAILSLVVLLPLALYINW, LAILLFILCVVFTVLTTLVVH, LLALQMPVLSWWALVTVITRA, and IVMFVSFATLLIQKLEQVVSF. The region spanning 345–579 is the ABC transporter domain; it reads VEFKDVSFSY…QGHFAALARA (235 aa). Residue 378–385 coordinates ATP; the sequence is GATGAGKS.

This sequence belongs to the ABC transporter superfamily. Beta-(1--&gt;2)glucan exporter (TC 3.A.1.108.1) family. Homodimer.

Its subcellular location is the cell inner membrane. The catalysed reaction is [(1-&gt;2)-beta-D-glucosyl](n)(in) + ATP + H2O = [(1-&gt;2)-beta-D-glucosyl](n)(out) + ADP + phosphate + H(+). In terms of biological role, involved in beta-(1--&gt;2)glucan export. Transmembrane domains (TMD) form a pore in the inner membrane and the ATP-binding domain (NBD) is responsible for energy generation. The chain is Beta-(1--&gt;2)glucan export ATP-binding/permease protein NdvA from Rhodopseudomonas palustris (strain BisB18).